The chain runs to 1939 residues: Myosin-6 (1939 aa).

A Myosin N-terminal SH3-like domain is found at 32–81; it reads DIRTECFVPDDKEEFVKAKIVSREGGKVTAETENGKTVTVKEDQVMQQNP. A Myosin motor domain is found at 85-780; that stretch reads DKIEDMAMLT…LLGLLEEMRD (696 aa). Lysine 129 carries the post-translational modification N6,N6,N6-trimethyllysine. 178-185 lines the ATP pocket; sequence GESGAGKT. Threonine 379 carries the phosphothreonine modification. Serine 417 is subject to Phosphoserine. Actin-binding regions lie at residues 657–679 and 759–773; these read LNKL…IPNE and KFGH…GLLG. The IQ domain occupies 783 to 812; that stretch reads LSRIITRIQAQARGQLMRIEFKKMVERRDA. Positions 842 to 1939 form a coiled coil; the sequence is LKSAETEKEM…GAKQKMHDEE (1098 aa). A phosphoserine mark is found at serine 1090 and serine 1139. The residue at position 1261 (tyrosine 1261) is a Phosphotyrosine. Position 1271 is a phosphoserine (serine 1271). A phosphothreonine mark is found at threonine 1277 and threonine 1284. Position 1309 is a phosphoserine (serine 1309). Phosphotyrosine is present on tyrosine 1310. At threonine 1311 the chain carries Phosphothreonine. Residue serine 1512 is modified to Phosphoserine. Phosphothreonine is present on residues threonine 1515 and threonine 1681. The segment at 1908–1939 is disordered; that stretch reads AEERADIAESQVNKLRAKSRDIGAKQKMHDEE. Over residues 1925 to 1939 the composition is skewed to basic and acidic residues; sequence KSRDIGAKQKMHDEE.

Belongs to the TRAFAC class myosin-kinesin ATPase superfamily. Myosin family. As to quaternary structure, muscle myosin is a hexameric protein that consists of 2 heavy chain subunits (MHC), 2 alkali light chain subunits (MLC) and 2 regulatory light chain subunits (MLC-2).

It is found in the cytoplasm. The protein resides in the myofibril. Functionally, muscle contraction. The protein is Myosin-6 (MYH6) of Mesocricetus auratus (Golden hamster).